Reading from the N-terminus, the 152-residue chain is Superoxide dismutase [Cu-Zn] (152 aa).

Residues His-45, His-47, and His-62 each coordinate Cu cation. A disulfide bridge links Cys-56 with Cys-145. His-62, His-70, His-79, and Asp-82 together coordinate Zn(2+). His-119 is a binding site for Cu cation.

This sequence belongs to the Cu-Zn superoxide dismutase family. As to quaternary structure, homodimer. Cu cation serves as cofactor. The cofactor is Zn(2+).

Its subcellular location is the cytoplasm. The enzyme catalyses 2 superoxide + 2 H(+) = H2O2 + O2. Destroys radicals which are normally produced within the cells and which are toxic to biological systems. The sequence is that of Superoxide dismutase [Cu-Zn] (SODCC) from Panax ginseng (Korean ginseng).